We begin with the raw amino-acid sequence, 222 residues long: Superoxide dismutase [Mn], mitochondrial (222 aa).

A mitochondrion-targeting transit peptide spans 1–24; it reads MLSRGVCGTSRQLAPALGYLGSRQ. His-50 lines the Mn(2+) pocket. Tyr-58 bears the 3'-nitrotyrosine mark. Lys-68 and Lys-75 each carry N6-acetyllysine; alternate. N6-succinyllysine; alternate occurs at positions 68 and 75. Residue His-98 coordinates Mn(2+). Lys-114 carries the N6-acetyllysine modification. Lys-122 and Lys-130 each carry N6-acetyllysine; alternate. N6-succinyllysine; alternate occurs at positions 122 and 130. Mn(2+) contacts are provided by Asp-183 and His-187. Lys-202 is subject to N6-acetyllysine.

The protein belongs to the iron/manganese superoxide dismutase family. Homotetramer. It depends on Mn(2+) as a cofactor. In terms of processing, nitrated under oxidative stress. Nitration coupled with oxidation inhibits the catalytic activity. Post-translationally, acetylation at Lys-122 decreases enzymatic activity. Deacetylated by SIRT3 upon exposure to ionizing radiations or after long fasting. Polyubiquitinated; leading to proteasomal degradation. Deubiquitinated by USP36 which increases protein stability.

Its subcellular location is the mitochondrion matrix. It carries out the reaction 2 superoxide + 2 H(+) = H2O2 + O2. Functionally, destroys superoxide anion radicals which are normally produced within the cells and which are toxic to biological systems. In Pongo pygmaeus (Bornean orangutan), this protein is Superoxide dismutase [Mn], mitochondrial (SOD2).